The sequence spans 690 residues: Methionine--tRNA ligase (690 aa).

The 'HIGH' region motif lies at 20–30 (PYANGSIHLGH). Zn(2+) contacts are provided by Cys-151, Cys-154, Cys-164, and Cys-167. The 'KMSKS' region motif lies at 337–341 (KMSKS). Residue Lys-340 participates in ATP binding. A tRNA-binding domain is found at 589 to 690 (DFAKVDLRIA…EGAQPGMRVM (102 aa)).

This sequence belongs to the class-I aminoacyl-tRNA synthetase family. MetG type 1 subfamily. As to quaternary structure, homodimer. The cofactor is Zn(2+).

It localises to the cytoplasm. It carries out the reaction tRNA(Met) + L-methionine + ATP = L-methionyl-tRNA(Met) + AMP + diphosphate. Its function is as follows. Is required not only for elongation of protein synthesis but also for the initiation of all mRNA translation through initiator tRNA(fMet) aminoacylation. The chain is Methionine--tRNA ligase from Vibrio vulnificus (strain CMCP6).